A 476-amino-acid chain; its full sequence is NADH-quinone oxidoreductase subunit N (476 aa).

Helical transmembrane passes span 5–25, 38–58, 70–90, 97–117, 122–142, 157–177, 196–218, 231–253, 264–284, 292–312, 318–338, 364–384, 401–421, and 445–465; these read LALI…LMLG, LSAL…FGVE, AFGG…ILVA, GMRA…GIMA, LMTL…LASF, FVLG…LYGF, IGLI…AVPF, TPVT…ARIV, WQQI…VGAI, LLAY…AAGT, GVLT…LVVL, LAAA…LFGF, PLAV…IAII, and IVAA…PALA.

This sequence belongs to the complex I subunit 2 family. NDH-1 is composed of 14 different subunits. Subunits NuoA, H, J, K, L, M, N constitute the membrane sector of the complex.

The protein resides in the cell inner membrane. It carries out the reaction a quinone + NADH + 5 H(+)(in) = a quinol + NAD(+) + 4 H(+)(out). Its function is as follows. NDH-1 shuttles electrons from NADH, via FMN and iron-sulfur (Fe-S) centers, to quinones in the respiratory chain. The immediate electron acceptor for the enzyme in this species is believed to be ubiquinone. Couples the redox reaction to proton translocation (for every two electrons transferred, four hydrogen ions are translocated across the cytoplasmic membrane), and thus conserves the redox energy in a proton gradient. In Sphingopyxis alaskensis (strain DSM 13593 / LMG 18877 / RB2256) (Sphingomonas alaskensis), this protein is NADH-quinone oxidoreductase subunit N.